Consider the following 179-residue polypeptide: ATP-dependent protease subunit HslV (179 aa).

Thr-7 is an active-site residue. Na(+) contacts are provided by Gly-162, Cys-165, and Thr-168.

Belongs to the peptidase T1B family. HslV subfamily. In terms of assembly, a double ring-shaped homohexamer of HslV is capped on each side by a ring-shaped HslU homohexamer. The assembly of the HslU/HslV complex is dependent on binding of ATP.

It is found in the cytoplasm. The enzyme catalyses ATP-dependent cleavage of peptide bonds with broad specificity.. Allosterically activated by HslU binding. Its function is as follows. Protease subunit of a proteasome-like degradation complex believed to be a general protein degrading machinery. In Bordetella pertussis (strain Tohama I / ATCC BAA-589 / NCTC 13251), this protein is ATP-dependent protease subunit HslV.